Reading from the N-terminus, the 85-residue chain is Large ribosomal subunit protein bL27 (85 aa).

The tract at residues 1–20 is disordered; sequence MATKKAGGSTRNGRDSEAKR.

This sequence belongs to the bacterial ribosomal protein bL27 family.

The chain is Large ribosomal subunit protein bL27 from Pasteurella multocida (strain Pm70).